The following is an 86-amino-acid chain: Probable oxaloacetate decarboxylase gamma chain 1 (86 aa).

Residues 11 to 33 traverse the membrane as a helical segment; it reads AATLMVTGMAVVFLFLTLLVYLV.

This sequence belongs to the OadG family. As to quaternary structure, heterotrimer of an alpha, a beta and a gamma subunit. Na(+) serves as cofactor.

The protein localises to the cell membrane. The enzyme catalyses oxaloacetate + 2 Na(+)(in) + H(+) = pyruvate + 2 Na(+)(out) + CO2. In terms of biological role, catalyzes the decarboxylation of oxaloacetate coupled to Na(+) translocation. The chain is Probable oxaloacetate decarboxylase gamma chain 1 (oadG1) from Vibrio cholerae serotype O1 (strain ATCC 39315 / El Tor Inaba N16961).